Reading from the N-terminus, the 430-residue chain is 26S protease regulatory subunit 6A (430 aa).

218 to 225 (GPPGTGKT) serves as a coordination point for ATP.

It belongs to the AAA ATPase family. As to quaternary structure, component of the 19S proteasome regulatory particle complex. The 26S proteasome consists of a 20S core particle (CP) and two 19S regulatory subunits (RP). The regulatory particle is made of a lid composed of 9 subunits, a base containing 6 ATPases including the PSMC3 homolog rpt-5 and few additional components.

It localises to the cytoplasm. The protein resides in the nucleus. Functionally, component of the 26S proteasome, a multiprotein complex involved in the ATP-dependent degradation of ubiquitinated proteins. This complex plays a key role in the maintenance of protein homeostasis by removing misfolded or damaged proteins, which could impair cellular functions, and by removing proteins whose functions are no longer required. Therefore, the proteasome participates in numerous cellular processes, including cell cycle progression, apoptosis, or DNA damage repair. Belongs to the heterohexameric ring of AAA (ATPases associated with diverse cellular activities) proteins that unfolds ubiquitinated target proteins that are concurrently translocated into a proteolytic chamber and degraded into peptides. The sequence is that of 26S protease regulatory subunit 6A from Caenorhabditis elegans.